The primary structure comprises 405 residues: Arginine biosynthesis bifunctional protein ArgJ (405 aa).

Substrate contacts are provided by threonine 152, lysine 178, threonine 189, glutamate 276, asparagine 400, and threonine 405. Catalysis depends on threonine 189, which acts as the Nucleophile.

This sequence belongs to the ArgJ family. Heterotetramer of two alpha and two beta chains.

It is found in the cytoplasm. It carries out the reaction N(2)-acetyl-L-ornithine + L-glutamate = N-acetyl-L-glutamate + L-ornithine. The catalysed reaction is L-glutamate + acetyl-CoA = N-acetyl-L-glutamate + CoA + H(+). The protein operates within amino-acid biosynthesis; L-arginine biosynthesis; L-ornithine and N-acetyl-L-glutamate from L-glutamate and N(2)-acetyl-L-ornithine (cyclic): step 1/1. It functions in the pathway amino-acid biosynthesis; L-arginine biosynthesis; N(2)-acetyl-L-ornithine from L-glutamate: step 1/4. In terms of biological role, catalyzes two activities which are involved in the cyclic version of arginine biosynthesis: the synthesis of N-acetylglutamate from glutamate and acetyl-CoA as the acetyl donor, and of ornithine by transacetylation between N(2)-acetylornithine and glutamate. The polypeptide is Arginine biosynthesis bifunctional protein ArgJ (Pseudomonas savastanoi pv. phaseolicola (strain 1448A / Race 6) (Pseudomonas syringae pv. phaseolicola (strain 1448A / Race 6))).